Reading from the N-terminus, the 408-residue chain is CCA-adding enzyme (408 aa).

ATP is bound by residues glycine 8 and arginine 11. Positions 8 and 11 each coordinate CTP. Mg(2+) contacts are provided by glutamate 21 and aspartate 23. The ATP site is built by arginine 91, arginine 137, and arginine 140. The CTP site is built by arginine 91, arginine 137, and arginine 140. In terms of domain architecture, HD spans 226–329; sequence TGYYTMTTLS…MTLFHVFDCW (104 aa).

The protein belongs to the tRNA nucleotidyltransferase/poly(A) polymerase family. Bacterial CCA-adding enzyme type 2 subfamily. Requires Mg(2+) as cofactor.

It carries out the reaction a tRNA precursor + 2 CTP + ATP = a tRNA with a 3' CCA end + 3 diphosphate. The enzyme catalyses a tRNA with a 3' CCA end + 2 CTP + ATP = a tRNA with a 3' CCACCA end + 3 diphosphate. In terms of biological role, catalyzes the addition and repair of the essential 3'-terminal CCA sequence in tRNAs without using a nucleic acid template. Adds these three nucleotides in the order of C, C, and A to the tRNA nucleotide-73, using CTP and ATP as substrates and producing inorganic pyrophosphate. tRNA 3'-terminal CCA addition is required both for tRNA processing and repair. Also involved in tRNA surveillance by mediating tandem CCA addition to generate a CCACCA at the 3' terminus of unstable tRNAs. While stable tRNAs receive only 3'-terminal CCA, unstable tRNAs are marked with CCACCA and rapidly degraded. In Blochmanniella pennsylvanica (strain BPEN), this protein is CCA-adding enzyme.